A 538-amino-acid chain; its full sequence is RNA-binding protein Ro60 (538 aa).

M1 carries the N-acetylmethionine modification. 2 positions are modified to phosphoserine: S4 and S19. The TROVE domain maps to V16–K369. Positions R120–N284 are RNA-binding. An N6-acetyllysine modification is found at K224. The tract at residues F361–I538 is VWFA-like domain. Residues S378, S380, and T445 each coordinate a divalent metal cation.

Belongs to the Ro 60 kDa family. As to quaternary structure, identified in a IGF2BP1-dependent mRNP granule complex containing untranslated mRNAs. Found in a complex with PUF60 and Y5 RNA. Interacts with RAB11FIP5. As to expression, highest in brain, followed by lung, muscle, kidney and heart. Lower levels are found in testis, liver and spleen.

The protein localises to the cytoplasm. In terms of biological role, RNA-binding protein that binds to misfolded non-coding RNAs, pre-5S rRNA, and several small cytoplasmic RNA molecules known as Y RNAs. May play roles in cilia formation and/or maintenance. The protein is RNA-binding protein Ro60 of Mus musculus (Mouse).